The following is a 1369-amino-acid chain: DNA-directed RNA polymerase subunit beta' (1369 aa).

The disordered stretch occupies residues 1-43 (MTSSSPKTRKSSTKSKAKRGSKSKKAAEIKAVQRLSKTPPPFR). Residues 7–24 (KTRKSSTKSKAKRGSKSK) are compositionally biased toward basic residues. Residues cysteine 253, cysteine 320, cysteine 327, and cysteine 330 each coordinate Zn(2+). A disordered region spans residues 1294 to 1369 (TVDMPSSPVA…LQEEGLLSDE (76 aa)). The span at 1342-1351 (DDELSAEDQM) shows a compositional bias: acidic residues. Over residues 1357-1369 (LEGLQEEGLLSDE) the composition is skewed to low complexity.

Belongs to the RNA polymerase beta' chain family. RpoC2 subfamily. In terms of assembly, in cyanobacteria the RNAP catalytic core is composed of 2 alpha, 1 beta, 1 beta', 1 gamma and 1 omega subunit. When a sigma factor is associated with the core the holoenzyme is formed, which can initiate transcription. It depends on Zn(2+) as a cofactor.

The enzyme catalyses RNA(n) + a ribonucleoside 5'-triphosphate = RNA(n+1) + diphosphate. Functionally, DNA-dependent RNA polymerase catalyzes the transcription of DNA into RNA using the four ribonucleoside triphosphates as substrates. This Prochlorococcus marinus (strain NATL1A) protein is DNA-directed RNA polymerase subunit beta'.